A 38-amino-acid polypeptide reads, in one-letter code: Large ribosomal subunit protein bL36 (38 aa).

The protein belongs to the bacterial ribosomal protein bL36 family.

In Chlorobium phaeobacteroides (strain BS1), this protein is Large ribosomal subunit protein bL36.